Here is a 339-residue protein sequence, read N- to C-terminus: RNA polymerase II holoenzyme cyclin-like subunit (339 aa).

The tract at residues 48-67 (PNSADSSNGNAANNGGGNGR) is disordered. A compositionally biased stretch (low complexity) spans 49–60 (NSADSSNGNAAN). A Cyclin N-terminal domain is found at 93 to 194 (RIYCYFLIMK…LIEELQCYLI (102 aa)).

It belongs to the cyclin family. Cyclin C subfamily. In terms of assembly, component of the SRB8-11 complex, a regulatory module of the Mediator complex.

The protein localises to the nucleus. In terms of biological role, component of the SRB8-11 complex. The SRB8-11 complex is a regulatory module of the Mediator complex which is itself involved in regulation of basal and activated RNA polymerase II-dependent transcription. The SRB8-11 complex may be involved in the transcriptional repression of a subset of genes regulated by Mediator. It may inhibit the association of the Mediator complex with RNA polymerase II to form the holoenzyme complex. The SRB8-11 complex phosphorylates the C-terminal domain (CTD) of the largest subunit of RNA polymerase II. The protein is RNA polymerase II holoenzyme cyclin-like subunit (SSN8) of Candida glabrata (strain ATCC 2001 / BCRC 20586 / JCM 3761 / NBRC 0622 / NRRL Y-65 / CBS 138) (Yeast).